We begin with the raw amino-acid sequence, 400 residues long: Elongation factor Tu (400 aa).

The tr-type G domain maps to 10–209; the sequence is KPHVNIGTIG…VVDKYIPTPQ (200 aa). The tract at residues 19–26 is G1; it reads GHVDHGKT. 19–26 serves as a coordination point for GTP; the sequence is GHVDHGKT. Thr26 lines the Mg(2+) pocket. The interval 60–64 is G2; sequence GITIN. The G3 stretch occupies residues 81–84; the sequence is DCPG. Residues 81–85 and 136–139 each bind GTP; these read DCPGH and NKVD. The tract at residues 136–139 is G4; it reads NKVD. The G5 stretch occupies residues 174–176; the sequence is SAL.

It belongs to the TRAFAC class translation factor GTPase superfamily. Classic translation factor GTPase family. EF-Tu/EF-1A subfamily. In terms of assembly, monomer.

It localises to the cytoplasm. The enzyme catalyses GTP + H2O = GDP + phosphate + H(+). In terms of biological role, GTP hydrolase that promotes the GTP-dependent binding of aminoacyl-tRNA to the A-site of ribosomes during protein biosynthesis. The sequence is that of Elongation factor Tu from Caldicellulosiruptor saccharolyticus (strain ATCC 43494 / DSM 8903 / Tp8T 6331).